A 282-amino-acid polypeptide reads, in one-letter code: Formamidopyrimidine-DNA glycosylase (282 aa).

Pro-2 serves as the catalytic Schiff-base intermediate with DNA. The active-site Proton donor is the Glu-3. The Proton donor; for beta-elimination activity role is filled by Lys-60. DNA is bound by residues His-99, Arg-118, and Arg-163. The FPG-type zinc-finger motif lies at 248-282 (WVYGRTGEPCRVCGTSIERLKLGGRSAHFCPRCQA). Arg-272 serves as the catalytic Proton donor; for delta-elimination activity.

The protein belongs to the FPG family. As to quaternary structure, monomer. The cofactor is Zn(2+).

The enzyme catalyses Hydrolysis of DNA containing ring-opened 7-methylguanine residues, releasing 2,6-diamino-4-hydroxy-5-(N-methyl)formamidopyrimidine.. It catalyses the reaction 2'-deoxyribonucleotide-(2'-deoxyribose 5'-phosphate)-2'-deoxyribonucleotide-DNA = a 3'-end 2'-deoxyribonucleotide-(2,3-dehydro-2,3-deoxyribose 5'-phosphate)-DNA + a 5'-end 5'-phospho-2'-deoxyribonucleoside-DNA + H(+). Functionally, involved in base excision repair of DNA damaged by oxidation or by mutagenic agents. Acts as a DNA glycosylase that recognizes and removes damaged bases. Has a preference for oxidized purines, such as 7,8-dihydro-8-oxoguanine (8-oxoG). Has AP (apurinic/apyrimidinic) lyase activity and introduces nicks in the DNA strand. Cleaves the DNA backbone by beta-delta elimination to generate a single-strand break at the site of the removed base with both 3'- and 5'-phosphates. The sequence is that of Formamidopyrimidine-DNA glycosylase from Rippkaea orientalis (strain PCC 8801 / RF-1) (Cyanothece sp. (strain PCC 8801)).